We begin with the raw amino-acid sequence, 365 residues long: Eukaryotic translation initiation factor 3 subunit H (365 aa).

Positions 11–160 (VKVEALVVMK…LRAFRLSPKF (150 aa)) constitute an MPN domain.

Belongs to the eIF-3 subunit H family. Component of the eukaryotic translation initiation factor 3 (eIF-3) complex.

It localises to the cytoplasm. Component of the eukaryotic translation initiation factor 3 (eIF-3) complex, which is involved in protein synthesis of a specialized repertoire of mRNAs and, together with other initiation factors, stimulates binding of mRNA and methionyl-tRNAi to the 40S ribosome. The eIF-3 complex specifically targets and initiates translation of a subset of mRNAs involved in cell proliferation. The polypeptide is Eukaryotic translation initiation factor 3 subunit H (Aspergillus terreus (strain NIH 2624 / FGSC A1156)).